Here is a 125-residue protein sequence, read N- to C-terminus: Glycine cleavage system H protein (125 aa).

Residues 23 to 105 enclose the Lipoyl-binding domain; that stretch reads VSTVGITEHA…FEGGWLFKVR (83 aa). N6-lipoyllysine is present on Lys64.

The protein belongs to the GcvH family. In terms of assembly, the glycine cleavage system is composed of four proteins: P, T, L and H. (R)-lipoate is required as a cofactor.

The glycine cleavage system catalyzes the degradation of glycine. The H protein shuttles the methylamine group of glycine from the P protein to the T protein. The sequence is that of Glycine cleavage system H protein from Streptomyces coelicolor (strain ATCC BAA-471 / A3(2) / M145).